A 166-amino-acid polypeptide reads, in one-letter code: MHKLAHISFGIVGMFVNTCMVAKYVIINWEMYSMKKVNNDTVFGILQLETLLGDINSIFSEIESEYKMSREEILILLTLWQKGSMTLKEMDRFVEVKPYKRTRTYNNLVELEWIYKERPVDDERTVIIHFNEKLQQEKVELLNFISDAIASRATAMQNSLNAIIAV.

The segment at residues 87–110 is a DNA-binding region (H-T-H motif); the sequence is LKEMDRFVEVKPYKRTRTYNNLVE.

The protein belongs to the rot family.

In terms of biological role, global regulator with both positive and negative effects that mediates modulation of several genes involved in virulence. Also, modulates the expression of genes not previously implicated in pathogenesis. This is HTH-type transcriptional regulator rot (rot) from Staphylococcus aureus (strain MRSA252).